An 868-amino-acid polypeptide reads, in one-letter code: Translation initiation factor IF-2 (868 aa).

Residues 103–183 are compositionally biased toward basic and acidic residues; sequence RSELPETSDR…RQAAAERETV (81 aa). The interval 103 to 274 is disordered; that stretch reads RSELPETSDR…GRPMLMPEQK (172 aa). Residues 190 to 207 show a composition bias toward pro residues; the sequence is VAAPPIPRPAPEPRPPAR. The segment covering 213-254 has biased composition (basic and acidic residues); the sequence is PKAEAPRAHPAERETEARGDKRSAGLSRKDEYRELQGDDFRK. The span at 255–264 shows a compositional bias: basic residues; that stretch reads GGGKRKKPKT. Residues 369–538 enclose the tr-type G domain; sequence PRPPVVTIMG…LVQAEVLELK (170 aa). The G1 stretch occupies residues 378–385; the sequence is GHVDHGKT. Position 378–385 (378–385) interacts with GTP; sequence GHVDHGKT. The tract at residues 403 to 407 is G2; that stretch reads GITQH. The interval 424-427 is G3; that stretch reads DTPG. GTP is bound by residues 424-428 and 478-481; these read DTPGH and NKMD. Positions 478 to 481 are G4; sequence NKMD. The tract at residues 514 to 516 is G5; it reads SAK.

The protein belongs to the TRAFAC class translation factor GTPase superfamily. Classic translation factor GTPase family. IF-2 subfamily.

Its subcellular location is the cytoplasm. One of the essential components for the initiation of protein synthesis. Protects formylmethionyl-tRNA from spontaneous hydrolysis and promotes its binding to the 30S ribosomal subunits. Also involved in the hydrolysis of GTP during the formation of the 70S ribosomal complex. The sequence is that of Translation initiation factor IF-2 from Methylococcus capsulatus (strain ATCC 33009 / NCIMB 11132 / Bath).